Consider the following 359-residue polypeptide: MVQACEGRSRAQLPTLSLGADMTQPPPAKAPAKKHVRLQERRGSSVALMLDVRSLGTVEPICSVNTPREVTLHFLRTAGHPLTRWTLQHQPPSPKQLEEEFLKIPSNFVNPEDLDIPGHASKDRYKTILPNPQSRVCLGRAHSQEDSDYINANYIRGYDGKEKVYIATQGPMPNTVADFWEMVWQEDVSLIVMLTQLREGKEKCVHYWPTEEEAYGPFQIRIQGMKEHPEYTVRHLTIQHQQECRSVKHILFSAWPDHQTPESAGPLLRLVAEVETPETAANSGPIVVHCSAGIGRTGCFIATRIGCQQLKARGEVDILGIVCQLRLDRGGMIQTAEQYQFLHHTLALYAAQLPPETDP.

The disordered stretch occupies residues 1–34 (MVQACEGRSRAQLPTLSLGADMTQPPPAKAPAKK). The tract at residues 38-51 (LQERRGSSVALMLD) is interaction with MAP kinases. A Phosphoserine modification is found at serine 44. Threonine 66 carries the post-translational modification Phosphothreonine. Residues serine 93 and serine 143 each carry the phosphoserine modification. Positions 97–349 (LEEEFLKIPS…QFLHHTLALY (253 aa)) constitute a Tyrosine-protein phosphatase domain. Residues aspartate 257, 290-296 (CSAGIGR), and glutamine 334 each bind substrate. Cysteine 290 serves as the catalytic Phosphocysteine intermediate. Residue cysteine 290 is modified to Cysteine sulfenic acid (-SOH).

Belongs to the protein-tyrosine phosphatase family. Non-receptor class subfamily. In terms of processing, oxidized at active site cysteine. Treatment with pervanadate (vanadate and H(2)O(2)) or with antigen enhanced oxidation of active site cysteine.

The protein localises to the cytoplasm. It localises to the cytoskeleton. It catalyses the reaction O-phospho-L-tyrosyl-[protein] + H2O = L-tyrosyl-[protein] + phosphate. Inhibited in cells after FCER1A triggering. May play a role in the regulation of T and B-lymphocyte development and signal transduction. The protein is Tyrosine-protein phosphatase non-receptor type 7 (Ptpn7) of Rattus norvegicus (Rat).